We begin with the raw amino-acid sequence, 407 residues long: Schlafen-like protein 1 (407 aa).

2 disordered regions span residues 1–28 and 137–191; these read MTPMKRSVQTQVSEPFMESWGEESLPEL and AQGP…CQGR. Low complexity predominate over residues 155-167; the sequence is GLSPGPSPGSGVP. The segment covering 181–190 has biased composition (polar residues); that stretch reads QAQQLQSCQG. 261–268 contacts ATP; the sequence is GVEDSGLV. Residues 366 to 398 are a coiled coil; the sequence is RQRWLVELGKLEEKMKALMMEKEQLQQQLQQHG.

The protein belongs to the Schlafen family. Subgroup I subfamily.

The protein is Schlafen-like protein 1 (SLFNL1) of Homo sapiens (Human).